An 80-amino-acid polypeptide reads, in one-letter code: Metallothionein-like protein type 2, MT2-22 (80 aa).

The protein belongs to the metallothionein superfamily. Type 15 family.

Functionally, metallothioneins have a high content of cysteine residues that bind various heavy metals. This is Metallothionein-like protein type 2, MT2-22 from Brassica juncea (Indian mustard).